Consider the following 295-residue polypeptide: MTHLFEGVGVALTTPFTNNKVNLEALKAHVNFLLENNAQAIIVNGTTAESPTLTTDEKELILKTVIDLVDKRVPVIAGTGTNDTEKSIQASIQAKALGADAIMLITTYYNKTNQRGLVKHFEAIADAVKLPVVLYNVPSRTNMTIEPETVEILSQHPSIVALKDATNDFEYLEEVKKRIDTNSFALYSGNDDNVVEYYQRGGKGVISVIANVIPKEFQALYDAQQSGLDIQDQFKPIGILLSALSVDINPIPIKALTSYLGFGNYELRLPLITLEDTDTKVLREAYNIFKAGENE.

Residue Thr-47 coordinates pyruvate. Tyr-135 functions as the Proton donor/acceptor in the catalytic mechanism. Catalysis depends on Lys-163, which acts as the Schiff-base intermediate with substrate. Ile-206 is a pyruvate binding site.

Belongs to the DapA family. As to quaternary structure, homodimer.

It localises to the cytoplasm. The catalysed reaction is L-aspartate 4-semialdehyde + pyruvate = (2S,4S)-4-hydroxy-2,3,4,5-tetrahydrodipicolinate + H2O + H(+). Its pathway is amino-acid biosynthesis; L-lysine biosynthesis via DAP pathway; (S)-tetrahydrodipicolinate from L-aspartate: step 3/4. Functionally, catalyzes the condensation of (S)-aspartate-beta-semialdehyde [(S)-ASA] and pyruvate to 4-hydroxy-tetrahydrodipicolinate (HTPA). The sequence is that of 4-hydroxy-tetrahydrodipicolinate synthase from Staphylococcus aureus (strain bovine RF122 / ET3-1).